A 420-amino-acid polypeptide reads, in one-letter code: Glutamyl-tRNA reductase (420 aa).

Substrate is bound by residues 49-52 (TCNR), Ser-109, 114-116 (EPQ), and Gln-120. The active-site Nucleophile is Cys-50. Position 189–194 (189–194 (GAGETI)) interacts with NADP(+).

The protein belongs to the glutamyl-tRNA reductase family. As to quaternary structure, homodimer.

The catalysed reaction is (S)-4-amino-5-oxopentanoate + tRNA(Glu) + NADP(+) = L-glutamyl-tRNA(Glu) + NADPH + H(+). It functions in the pathway porphyrin-containing compound metabolism; protoporphyrin-IX biosynthesis; 5-aminolevulinate from L-glutamyl-tRNA(Glu): step 1/2. Functionally, catalyzes the NADPH-dependent reduction of glutamyl-tRNA(Glu) to glutamate 1-semialdehyde (GSA). In Serratia proteamaculans (strain 568), this protein is Glutamyl-tRNA reductase.